The chain runs to 301 residues: Protease HtpX homolog (301 aa).

2 consecutive transmembrane segments (helical) span residues 11–31 and 34–54; these read VLLL…IAGA and NSAF…YSYW. Histidine 138 contacts Zn(2+). The active site involves glutamate 139. Histidine 142 lines the Zn(2+) pocket. 2 helical membrane passes run 154-174 and 188-208; these read AAAV…AAIF and LVGL…QLAI. Zn(2+) is bound at residue glutamate 213.

It belongs to the peptidase M48B family. Requires Zn(2+) as cofactor.

The protein resides in the cell membrane. In Kocuria rhizophila (strain ATCC 9341 / DSM 348 / NBRC 103217 / DC2201), this protein is Protease HtpX homolog.